A 175-amino-acid polypeptide reads, in one-letter code: Nucleoside diphosphate kinase 6 (175 aa).

ATP is bound by residues K15, F63, R91, T97, R111, and N121. The active-site Pros-phosphohistidine intermediate is the H124.

The protein belongs to the NDK family. Mg(2+) serves as cofactor.

The enzyme catalyses a 2'-deoxyribonucleoside 5'-diphosphate + ATP = a 2'-deoxyribonucleoside 5'-triphosphate + ADP. It carries out the reaction a ribonucleoside 5'-diphosphate + ATP = a ribonucleoside 5'-triphosphate + ADP. Its function is as follows. Major role in the synthesis of nucleoside triphosphates other than ATP. The ATP gamma phosphate is transferred to the NDP beta phosphate via a ping-pong mechanism, using a phosphorylated active-site intermediate. This chain is Nucleoside diphosphate kinase 6 (nme6), found in Danio rerio (Zebrafish).